A 632-amino-acid chain; its full sequence is Palmitoyltransferase ZDHHC17 (632 aa).

Over 1 to 304 (MQREEGFNTK…LKADKEFRQK (304 aa)) the chain is Cytoplasmic. Positions 11–305 (MADGPDEYET…KADKEFRQKV (295 aa)) are necessary and sufficient for interaction with DNAJC5 and SNAP25. ANK repeat units lie at residues 51 to 86 (THIDDYSTWDIVKATQYGIYERCRELVEAGYDVRQP), 89 to 118 (ENVTLLHWAAINNRIDLVKYYISKGAIVDQ), 123 to 152 (LNSTPLHWATRQGHLSMVVQLMKYGADPSL), 156 to 185 (EGCSCIHLAAQFGHTSIVAYLIAKGQDVDM), 189 to 219 (NGMTPLMWAAYRTHSVDPTRLLLTFNVSVNL), 224 to 253 (HKNTALHWAVLAGNTTVISLLLEAGGNVDA), and 257 to 286 (KGESALDLAKQRKNVWMINHLQEARQAKGY). The next 2 helical transmembrane spans lie at 305–325 (VMLGTPFLVIWLVGFIADLDI) and 326–346 (DSWLIKGLMYGGVWATVQFLS). Topologically, residues 347-357 (KSFFDHSMHSA) are cytoplasmic. Residues 358–378 (LPLGIYLATKFWMYVTWFFWF) traverse the membrane as a helical segment. The Lumenal portion of the chain corresponds to 379–381 (WND). Residues 382 to 402 (LNFLFIHLPFLANSVALFYNF) form a helical membrane-spanning segment. Topologically, residues 403–480 (GKSWKSDPGI…GNCVGAGNHR (78 aa)) are cytoplasmic. Residues 437–487 (IFCSTCLIRKPVRSKHCGVCNRCIAKFDHHCPWVGNCVGAGNHRYFMGYLF) form the DHHC domain. The S-palmitoyl cysteine intermediate role is filled by cysteine 467. The helical transmembrane segment at 481–501 (YFMGYLFFLLFMICWMIYGCV) threads the bilayer. At 502 to 529 (SYWGLHCETTYTKDGFWTYITQIATCSP) the chain is on the lumenal side. A helical membrane pass occupies residues 530-550 (WMFWMFLNSVFHFLWVAVLLM). Residues 551 to 632 (CQLYQITCLG…QISGSGYQLV (82 aa)) lie on the Cytoplasmic side of the membrane.

The protein belongs to the DHHC palmitoyltransferase family. AKR/ZDHHC17 subfamily. Interacts (via ANK repeats) with numerous proteins (via the consensus sequence motif [VIAP]-[VIT]-x-x-Q-P). Interacts (via ANK repeats) with CLIP3. Interacts (via ANK repeats) with HTT. Interacts (via ANK repeats) with DNAJC5 (via C-terminus). Interacts (via ANK repeats) with MAP6. Interacts (via ANK repeats) with SNAP23. Interacts (via ANK repeats) with SNAP25. Interacts (via ANK repeats) with EVL. Interacts with SPRED1 and SPRED3. Interacts with GPM6A and OPTN. May interact (via ANK repeats) with SPRED2. May interact with NTRK1; may regulate its localization and function. In terms of processing, autopalmitoylated. Autopalmitoylation has a regulatory role in ZDHHC17-mediated Mg(2+) transport. In terms of tissue distribution, expressed in liver, testis, kidney, heart, pancreas and brain. Highest expression was seen in the brain. Localized predominantly in the perinuclear regions of neurons from the cortex, striatum and hippocampus. Colocalized with HTT in the medium spiny neurons of the striatum and the spiny neurons that project into the globus pallidus.

The protein resides in the golgi apparatus membrane. It localises to the cytoplasmic vesicle membrane. The protein localises to the presynaptic cell membrane. It catalyses the reaction L-cysteinyl-[protein] + hexadecanoyl-CoA = S-hexadecanoyl-L-cysteinyl-[protein] + CoA. It carries out the reaction L-cysteinyl-[protein] + tetradecanoyl-CoA = S-tetradecanoyl-L-cysteinyl-[protein] + CoA. The enzyme catalyses L-cysteinyl-[protein] + octadecanoyl-CoA = S-octadecanoyl-L-cysteinyl-[protein] + CoA. Palmitoyltransferase that catalyzes the addition of palmitate onto various protein substrates and is involved in a variety of cellular processes. Has no stringent fatty acid selectivity and in addition to palmitate can also transfer onto target proteins myristate from tetradecanoyl-CoA and stearate from octadecanoyl-CoA. Palmitoyltransferase specific for a subset of neuronal proteins, including SNAP25, DLG4/PSD95, GAD2, SYT1 and HTT. Also palmitoylates neuronal protein GPM6A as well as SPRED1 and SPRED3. Could also play a role in axonogenesis through the regulation of NTRK1 and the downstream ERK1/ERK2 signaling cascade. May be involved in the sorting or targeting of critical proteins involved in the initiating events of endocytosis at the plasma membrane. May play a role in Mg(2+) transport. Could also palmitoylate DNAJC5 and regulate its localization to the Golgi membrane. Palmitoylates CASP6, thereby preventing its dimerization and subsequent activation. This is Palmitoyltransferase ZDHHC17 from Mus musculus (Mouse).